A 317-amino-acid polypeptide reads, in one-letter code: Melanocyte-stimulating hormone receptor (317 aa).

Over 1-37 (MPVQGSQRRLLGSLNSTPTATPRLGLAANQTGARCLE) the chain is Extracellular. An N-linked (GlcNAc...) asparagine glycan is attached at Asn29. A helical membrane pass occupies residues 38–63 (VSIPDGLFLSLGLVSLVENVLVVVAI). Residues 64–72 (ARNRNLHSP) lie on the Cytoplasmic side of the membrane. The helical transmembrane segment at 73–93 (MYCFICCLALSDLLVSGSNML) threads the bilayer. The Extracellular portion of the chain corresponds to 94–118 (ETAVFLLLEAGALAARAAVVQQLDN). The chain crosses the membrane as a helical span at residues 119–140 (VIDVITCSSMLSSLCFLGAIAV). Residues 141-163 (DRYISIFYALRYHSIVTLRRARR) lie on the Cytoplasmic side of the membrane. Residues 164-183 (VVAAIWVASVLFSTLFIAYC) form a helical membrane-spanning segment. At 184 to 191 (DHAAVLLC) the chain is on the extracellular side. A helical membrane pass occupies residues 192–211 (LVVFFLAMLVLMAVLYVHML). Residues 212–240 (ARACQHAQGIAQLHKRQRPAHQGVGLKGA) are Cytoplasmic-facing. A helical transmembrane segment spans residues 241 to 266 (ATLTILLGIFFLCWGPFFLHLTLIVL). The Extracellular segment spans residues 267–279 (CPQHPTCSCIFKN). The chain crosses the membrane as a helical span at residues 280–300 (FNLFLTLIICNAIIDPLIYAF). At 301–317 (RSQELRRTLKKVLLCSW) the chain is on the cytoplasmic side. Cys315 carries the S-palmitoyl cysteine lipid modification.

The protein belongs to the G-protein coupled receptor 1 family. As to quaternary structure, interacts with MGRN1, but does not undergo MGRN1-mediated ubiquitination; this interaction competes with GNAS-binding and thus inhibits agonist-induced cAMP production. Interacts with OPN3; the interaction results in a decrease in MC1R-mediated cAMP signaling and ultimately a decrease in melanin production in melanocytes.

Its subcellular location is the cell membrane. Receptor for MSH (alpha, beta and gamma) and ACTH. The activity of this receptor is mediated by G proteins which activate adenylate cyclase. Mediates melanogenesis, the production of eumelanin (black/brown) and phaeomelanin (red/yellow), via regulation of cAMP signaling in melanocytes. The polypeptide is Melanocyte-stimulating hormone receptor (MC1R) (Trachypithecus obscurus (Dusky leaf-monkey)).